The primary structure comprises 292 residues: NAD kinase (292 aa).

The active-site Proton acceptor is the aspartate 73. NAD(+) is bound by residues 73-74 (DG), 147-148 (NE), histidine 158, arginine 175, aspartate 177, 188-193 (TGYSLS), and glutamine 247.

This sequence belongs to the NAD kinase family. The cofactor is a divalent metal cation.

The protein resides in the cytoplasm. The enzyme catalyses NAD(+) + ATP = ADP + NADP(+) + H(+). Functionally, involved in the regulation of the intracellular balance of NAD and NADP, and is a key enzyme in the biosynthesis of NADP. Catalyzes specifically the phosphorylation on 2'-hydroxyl of the adenosine moiety of NAD to yield NADP. This is NAD kinase from Buchnera aphidicola subsp. Schizaphis graminum (strain Sg).